Consider the following 216-residue polypeptide: Transmembrane protein 186 (216 aa).

Residues 1–68 are Mitochondrial matrix-facing; the sequence is MAFLLRAVPR…IYRFNAIRAL (68 aa). Residues 69 to 91 form a helical membrane-spanning segment; it reads GFLSRLKLAQTAVTVVALPPGFY. Residues 92–103 are Mitochondrial intermembrane-facing; it reads CYSQGLMTLSSL. The helical transmembrane segment at 104 to 124 threads the bilayer; that stretch reads GLMSGIASFALVMLCWMSHFF. The Mitochondrial matrix segment spans residues 125-216; it reads RRLVGILYVN…GTLATLKNSK (92 aa).

It belongs to the TMEM186 family. As to quaternary structure, part of the mitochondrial complex I assembly/MCIA complex that comprises at least the core subunits TMEM126B, NDUFAF1, ECSIT and ACAD9 and complement subunits such as COA1 and TMEM186. Interacts with MT-ND3.

The protein localises to the mitochondrion inner membrane. Its function is as follows. As part of the MCIA complex, required for efficient assembly of the mitochondrial complex I. This chain is Transmembrane protein 186, found in Rattus norvegicus (Rat).